We begin with the raw amino-acid sequence, 1149 residues long: ATP-dependent helicase/deoxyribonuclease subunit B (1149 aa).

8–15 is a binding site for ATP; sequence GRAGSGKS. [4Fe-4S] cluster-binding residues include C788, C1106, C1109, and C1115.

The protein belongs to the helicase family. AddB/RexB type 1 subfamily. As to quaternary structure, heterodimer of AddA and AddB. Mg(2+) serves as cofactor. [4Fe-4S] cluster is required as a cofactor.

Its function is as follows. The heterodimer acts as both an ATP-dependent DNA helicase and an ATP-dependent, dual-direction single-stranded exonuclease. Recognizes the chi site generating a DNA molecule suitable for the initiation of homologous recombination. The AddB subunit has 5' -&gt; 3' nuclease activity but not helicase activity. In Ruminiclostridium cellulolyticum (strain ATCC 35319 / DSM 5812 / JCM 6584 / H10) (Clostridium cellulolyticum), this protein is ATP-dependent helicase/deoxyribonuclease subunit B.